The chain runs to 220 residues: MILLKLYLTLAAILCQSRGTTSLDLDDLMTTNPEIQNEIINKHNDLRRTVDPPAKNMLKMSWDNIIAESAKRAALRCNQNEHTPVSGRTIGGVVCGENYFMSSNPRTWSFGIQSWFDERNYFKFGFGPTRAGVMVGHYTQVVWYKSYKMGCAINLCPNEPLKYFLVCQYCPGGNVVGRKYEPYAIGEPCAACPNNCDNGLCTNPCEHSNQYINCPDLTKQ.

A signal peptide spans 1–22; that stretch reads MILLKLYLTLAAILCQSRGTTS. The SCP domain occupies 41 to 169; that stretch reads NKHNDLRRTV…PLKYFLVCQY (129 aa). 5 disulfide bridges follow: C77–C156, C95–C170, C151–C167, C189–C196, and C192–C201. The ShKT domain occupies 205-220; that stretch reads CEHSNQYINCPDLTKQ.

This sequence belongs to the CRISP family. Post-translationally, contains 8 disulfide bonds. As to expression, expressed by the venom gland.

It localises to the secreted. Functionally, blocks ryanodine receptors, and potassium channels. This Varanus acanthurus (Ridge-tailed monitor) protein is Cysteine-rich venom protein VAR5.